Here is a 369-residue protein sequence, read N- to C-terminus: 4-hydroxy-3-methylbut-2-en-1-yl diphosphate synthase (flavodoxin) (369 aa).

4 residues coordinate [4Fe-4S] cluster: cysteine 270, cysteine 273, cysteine 305, and glutamate 312.

Belongs to the IspG family. It depends on [4Fe-4S] cluster as a cofactor.

The enzyme catalyses (2E)-4-hydroxy-3-methylbut-2-enyl diphosphate + oxidized [flavodoxin] + H2O + 2 H(+) = 2-C-methyl-D-erythritol 2,4-cyclic diphosphate + reduced [flavodoxin]. It participates in isoprenoid biosynthesis; isopentenyl diphosphate biosynthesis via DXP pathway; isopentenyl diphosphate from 1-deoxy-D-xylulose 5-phosphate: step 5/6. In terms of biological role, converts 2C-methyl-D-erythritol 2,4-cyclodiphosphate (ME-2,4cPP) into 1-hydroxy-2-methyl-2-(E)-butenyl 4-diphosphate. This chain is 4-hydroxy-3-methylbut-2-en-1-yl diphosphate synthase (flavodoxin), found in Pseudomonas syringae pv. tomato (strain ATCC BAA-871 / DC3000).